Reading from the N-terminus, the 255-residue chain is Cathepsin G (255 aa).

The N-terminal stretch at 1-18 (MQPLLLLLAFLLPTGAEA) is a signal peptide. Residues 19 to 20 (GE) constitute a propeptide, activation peptide. The tract at residues 21–25 (IIGGR) is important for antimicrobial activity. A Peptidase S1 domain is found at 21-243 (IIGGRESRPH…FLPWIRTTMR (223 aa)). C49 and C65 are joined by a disulfide. The active-site Charge relay system is the H64. N71 is a glycosylation site (N-linked (GlcNAc...) (complex) asparagine; alternate). N71 is a glycosylation site (N-linked (GlcNAc...) (paucimannose) asparagine; alternate). Residues 97–111 (HPQYNQRTIQNDIML) form an important for antimicrobial activity region. Catalysis depends on D108, which acts as the Charge relay system. 2 disulfide bridges follow: C142–C207 and C172–C186. The active-site Charge relay system is the S201. The propeptide occupies 245-255 (FKLLDQMETPL).

Belongs to the peptidase S1 family. (Microbial infection) Interacts with CASP4; the interaction is promoted by the Td92 surface protein of the periodontal pathogen T.denticola and leads to CASP4 activation. In terms of assembly, (Microbial infection) Interacts with M.tuberculosis protein Rv3364c. As to quaternary structure, (Microbial infection) Interacts with S.aureus EapH1; EapH1 acts as a reversible inhibitor of CATG activity. Two C-terminal truncation variants have been identified, one which ends at Arg-243 and one which ends at Ser-244. In terms of tissue distribution, expressed in neutrophils (at protein level). Expressed in B cells.

Its subcellular location is the cell membrane. It is found in the cytoplasmic granule. The protein localises to the secreted. The protein resides in the cytoplasm. It localises to the cytosol. Its subcellular location is the lysosome. It is found in the nucleus. It carries out the reaction Specificity similar to chymotrypsin C.. Inhibited by soybean trypsin inhibitor, benzamidine, the synthetic peptide R13K, Z-Gly-Leu-Phe-CH2Cl, phenylmethylsulfonyl fluoride, 3,4-dichloroisocoumarin, DFP, SBTI and alpha-1-antitrypsin. Inhibited by LPS from P.aeruginosa but not by LPS from S.minnesota. Not inhibited by elastinal, CMK, TLCK, ETDA or leupeptin. With respect to regulation, (Microbial infection) Inhibited reversibly by S.aureus EapH1. Its activity is regulated as follows. (Microbial infection) Activity is induced by the Td92 surface protein of the periodontal pathogen T.denticola. Serine protease with trypsin- and chymotrypsin-like specificity. Also displays antibacterial activity against Gram-negative and Gram-positive bacteria independent of its protease activity. Prefers Phe and Tyr residues in the P1 position of substrates but also cleaves efficiently after Trp and Leu. Shows a preference for negatively charged amino acids in the P2' position and for aliphatic amino acids both upstream and downstream of the cleavage site. Required for recruitment and activation of platelets which is mediated by the F2RL3/PAR4 platelet receptor. Binds reversibly to and stimulates B cells and CD4(+) and CD8(+) T cells. Also binds reversibly to natural killer (NK) cells and enhances NK cell cytotoxicity through its protease activity. Cleaves complement C3. Cleaves vimentin. Cleaves thrombin receptor F2R/PAR1 and acts as either an agonist or an inhibitor, depending on the F2R cleavage site. Cleavage of F2R at '41-Arg-|-Ser-42' results in receptor activation while cleavage at '55-Phe-|-Trp-56' results in inhibition of receptor activation. Cleaves the synovial mucin-type protein PRG4/lubricin. Cleaves and activates IL36G which promotes expression of chemokines CXCL1 and CXLC8 in keratinocytes. Cleaves IL33 into mature forms which have greater activity than the unprocessed form. Cleaves coagulation factor F8 to produce a partially activated form. Also cleaves and activates coagulation factor F10. Cleaves leukocyte cell surface protein SPN/CD43 to release its extracellular domain and trigger its intramembrane proteolysis by gamma-secretase, releasing the CD43 cytoplasmic tail chain (CD43-ct) which translocates to the nucleus. Cleaves CCL5/RANTES to produce RANTES(4-68) lacking the N-terminal three amino acids which exhibits reduced chemotactic and antiviral activities. During apoptosis, cleaves SMARCA2/BRM to produce a 160 kDa cleavage product which localizes to the cytosol. Cleaves myelin basic protein MBP in B cell lysosomes at '224-Phe-|-Lys-225' and '248-Phe-|-Ser-249', degrading the major immunogenic MBP epitope and preventing the activation of MBP-specific autoreactive T cells. Cleaves annexin ANXA1 and antimicrobial peptide CAMP to produce peptides which act on neutrophil N-formyl peptide receptors to enhance the release of CXCL2. Acts as a ligand for the N-formyl peptide receptor FPR1, enhancing phagocyte chemotaxis. Has antibacterial activity against the Gram-negative bacteria N.gonorrhoeae and P.aeruginosa. Likely to act against N.gonorrhoeae by interacting with N.gonorrhoeae penA/PBP2. Exhibits potent antimicrobial activity against the Gram-positive bacterium L.monocytogenes. Has antibacterial activity against the Gram-positive bacterium S.aureus and degrades S.aureus biofilms, allowing polymorphonuclear leukocytes to penetrate the biofilm and phagocytose bacteria. Has antibacterial activity against M.tuberculosis. Mediates CASP4 activation induced by the Td92 surface protein of the periodontal pathogen T.denticola, causing production and secretion of IL1A and leading to pyroptosis of gingival fibroblasts. Induces platelet aggregation which is strongly potentiated in the presence of ELANE. In Homo sapiens (Human), this protein is Cathepsin G (CTSG).